The following is a 366-amino-acid chain: 3-dehydroquinate synthase (366 aa).

NAD(+) contacts are provided by residues 73–78 (DGERAK), 107–111 (GVVGD), 131–132 (TT), lysine 144, and lysine 153. The Zn(2+) site is built by glutamate 186, histidine 249, and histidine 266.

This sequence belongs to the sugar phosphate cyclases superfamily. Dehydroquinate synthase family. The cofactor is Co(2+). Zn(2+) serves as cofactor. It depends on NAD(+) as a cofactor.

The protein resides in the cytoplasm. The enzyme catalyses 7-phospho-2-dehydro-3-deoxy-D-arabino-heptonate = 3-dehydroquinate + phosphate. It functions in the pathway metabolic intermediate biosynthesis; chorismate biosynthesis; chorismate from D-erythrose 4-phosphate and phosphoenolpyruvate: step 2/7. Its function is as follows. Catalyzes the conversion of 3-deoxy-D-arabino-heptulosonate 7-phosphate (DAHP) to dehydroquinate (DHQ). The chain is 3-dehydroquinate synthase from Koribacter versatilis (strain Ellin345).